We begin with the raw amino-acid sequence, 2185 residues long: Genome polyprotein (2185 aa).

Gly2 carries the N-myristoyl glycine; by host lipid modification. Residues 2–1495 (GAQVSTQKTG…HVSRAFICLQ (1494 aa)) lie on the Cytoplasmic side of the membrane. Residues 568–584 (FFQGPVEDAITAAIGRV) form an amphipathic alpha-helix region. Residues His872 and Asp890 each act as for protease 2A activity in the active site. Residues Cys907 and Cys909 each coordinate Zn(2+). The active-site For protease 2A activity is the Cys961. Zn(2+)-binding residues include Cys967 and His969. The tract at residues 1101–1173 (NNSWLKKFTE…EQSAPSQSDQ (73 aa)) is membrane-binding. The segment at 1101-1239 (NNSWLKKFTE…SPGAGKSVAT (139 aa)) is oligomerization. An RNA-binding region spans residues 1122 to 1126 (AVKIQ). Residues 1205–1361 (EKKMSNYIQF…SMYSQNGKIN (157 aa)) form the SF3 helicase domain. Zn(2+)-binding residues include Cys1369, Cys1381, and Cys1386. Residues 1369 to 1386 (CDDECCPVNFKKCCPLVC) form a C4-type; degenerate zinc finger. The segment at 1413 to 1420 (EYNHRHSV) is RNA-binding. Residues 1424–1429 (LEALFQ) are oligomerization. Residues 1496-1511 (ALTTFVSVAGIIYIIY) lie within the membrane without spanning it. Residues 1512 to 2185 (KLFAGFQGAY…TLRRKWLDSF (674 aa)) are Cytoplasmic-facing. Tyr1521 is modified (O-(5'-phospho-RNA)-tyrosine). The Peptidase C3 domain maps to 1541–1719 (GPAFEFAVAM…FSAALLKHYF (179 aa)). Residues His1580, Glu1611, and Cys1687 each act as for protease 3C activity in the active site. The region spanning 1950-2066 (GHLIAFDYSG…SYPWPIDASL (117 aa)) is the RdRp catalytic domain. Residues Asp1956 and Asp2052 each coordinate Mg(2+).

It belongs to the picornaviruses polyprotein family. As to quaternary structure, interacts with capsid protein VP1 and capsid protein VP3 to form heterotrimeric protomers. In terms of assembly, interacts with capsid protein VP0, and capsid protein VP3 to form heterotrimeric protomers. Five protomers subsequently associate to form pentamers which serve as building blocks for the capsid. Interacts with capsid protein VP2, capsid protein VP3 and capsid protein VP4 following cleavage of capsid protein VP0. Interacts with host CD55. Interacts with host CXADR. Interacts with capsid protein VP1 and capsid protein VP3 in the mature capsid. As to quaternary structure, interacts with capsid protein VP0 and capsid protein VP1 to form heterotrimeric protomers. Five protomers subsequently associate to form pentamers which serve as building blocks for the capsid. Interacts with capsid protein VP4 in the mature capsid. Interacts with protein 2C; this interaction may be important for virion morphogenesis. In terms of assembly, interacts with capsid protein VP1 and capsid protein VP3. Homodimer. As to quaternary structure, homohexamer; forms a hexameric ring structure with 6-fold symmetry characteristic of AAA+ ATPases. Interacts (via N-terminus) with host RTN3 (via reticulon domain); this interaction is important for viral replication. Interacts with capsid protein VP3; this interaction may be important for virion morphogenesis. In terms of assembly, interacts with protein 3CD. Homodimer. Interacts with host GBF1. Interacts (via GOLD domain) with host ACBD3 (via GOLD domain); this interaction allows the formation of a viral protein 3A/ACBD3 heterotetramer with a 2:2 stoichiometry, which will stimulate the recruitment of host PI4KB in order to synthesize PI4P at the viral RNA replication sites. As to quaternary structure, interacts with RNA-directed RNA polymerase. In terms of assembly, interacts with host TICAM1 (via C-terminus). Interacts with protein 3AB and with RNA-directed RNA polymerase. As to quaternary structure, interacts with Viral protein genome-linked and with protein 3CD. Requires Mg(2+) as cofactor. Post-translationally, specific enzymatic cleavages in vivo by the viral proteases yield processing intermediates and the mature proteins. Myristoylation is required for the formation of pentamers during virus assembly. Further assembly of 12 pentamers and a molecule of genomic RNA generates the provirion. In terms of processing, during virion maturation, immature virions are rendered infectious following cleavage of VP0 into VP4 and VP2. This maturation seems to be an autocatalytic event triggered by the presence of RNA in the capsid and it is followed by a conformational change infectious virion. Post-translationally, myristoylation is required during RNA encapsidation and formation of the mature virus particle. VPg is uridylylated by the polymerase into VPg-pUpU. This acts as a nucleotide-peptide primer for the genomic RNA replication.

It localises to the virion. Its subcellular location is the host cytoplasm. The protein resides in the host cytoplasmic vesicle membrane. It is found in the host nucleus. It carries out the reaction a ribonucleoside 5'-triphosphate + H2O = a ribonucleoside 5'-diphosphate + phosphate + H(+). The enzyme catalyses Selective cleavage of Tyr-|-Gly bond in the picornavirus polyprotein.. The catalysed reaction is RNA(n) + a ribonucleoside 5'-triphosphate = RNA(n+1) + diphosphate. It catalyses the reaction Selective cleavage of Gln-|-Gly bond in the poliovirus polyprotein. In other picornavirus reactions Glu may be substituted for Gln, and Ser or Thr for Gly.. With respect to regulation, replication or transcription is subject to high level of random mutations by the nucleotide analog ribavirin. Functionally, forms an icosahedral capsid of pseudo T=3 symmetry with capsid proteins VP2 and VP3. The capsid is 300 Angstroms in diameter, composed of 60 copies of each capsid protein and enclosing the viral positive strand RNA genome. Capsid protein VP1 mainly forms the vertices of the capsid. Capsid protein VP1 interacts with host CD55 and CXADR to provide virion attachment to target host cells. This attachment induces virion internalization. Tyrosine kinases are probably involved in the entry process. After binding to its receptor, the capsid undergoes conformational changes. Capsid protein VP1 N-terminus (that contains an amphipathic alpha-helix) and capsid protein VP4 are externalized. Together, they shape a pore in the host membrane through which viral genome is translocated to host cell cytoplasm. Its function is as follows. Forms an icosahedral capsid of pseudo T=3 symmetry with capsid proteins VP2 and VP3. The capsid is 300 Angstroms in diameter, composed of 60 copies of each capsid protein and enclosing the viral positive strand RNA genome. In terms of biological role, lies on the inner surface of the capsid shell. After binding to the host receptor, the capsid undergoes conformational changes. Capsid protein VP4 is released, Capsid protein VP1 N-terminus is externalized, and together, they shape a pore in the host membrane through which the viral genome is translocated into the host cell cytoplasm. Component of immature procapsids, which is cleaved into capsid proteins VP4 and VP2 after maturation. Allows the capsid to remain inactive before the maturation step. Functionally, cysteine protease that cleaves viral polyprotein and specific host proteins. It is responsible for the autocatalytic cleavage between the P1 and P2 regions, which is the first cleavage occurring in the polyprotein. Also cleaves the host translation initiation factor EIF4G1, in order to shut down the capped cellular mRNA translation. Inhibits the host nucleus-cytoplasm protein and RNA trafficking by cleaving host members of the nuclear pores. Counteracts stress granule formation probably by antagonizing its assembly or promoting its dissassembly. Cleaves and inhibits host IFIH1/MDA5, thereby inhibiting the type-I IFN production and the establishment of the antiviral state. Cleaves and inhibits host MAVS, thereby inhibiting the type-I IFN production and the establishment of the antiviral state. Its function is as follows. Plays an essential role in the virus replication cycle by acting as a viroporin. Creates a pore in the host endoplasmic reticulum and as a consequence releases Ca2+ in the cytoplasm of infected cell. In turn, high levels of cytoplasmic calcium may trigger membrane trafficking and transport of viral ER-associated proteins to viroplasms, sites of viral genome replication. In terms of biological role, induces and associates with structural rearrangements of intracellular membranes. Displays RNA-binding, nucleotide binding and NTPase activities. May play a role in virion morphogenesis and viral RNA encapsidation by interacting with the capsid protein VP3. Localizes the viral replication complex to the surface of membranous vesicles. Together with protein 3CD binds the Cis-Active RNA Element (CRE) which is involved in RNA synthesis initiation. Acts as a cofactor to stimulate the activity of 3D polymerase, maybe through a nucleid acid chaperone activity. Functionally, localizes the viral replication complex to the surface of membranous vesicles. It inhibits host cell endoplasmic reticulum-to-Golgi apparatus transport and causes the disassembly of the Golgi complex, possibly through GBF1 interaction. This would result in depletion of MHC, trail receptors and IFN receptors at the host cell surface. Plays an essential role in viral RNA replication by recruiting ACBD3 and PI4KB at the viral replication sites, thereby allowing the formation of the rearranged membranous structures where viral replication takes place. Its function is as follows. Acts as a primer for viral RNA replication and remains covalently bound to viral genomic RNA. VPg is uridylylated prior to priming replication into VPg-pUpU. The oriI viral genomic sequence may act as a template for this. The VPg-pUpU is then used as primer on the genomic RNA poly(A) by the RNA-dependent RNA polymerase to replicate the viral genome. During genome replication, the VPg-RNA linkage is removed by the host TDP2, thereby accelerating replication. During the late stage of the replication cycle, host TDP2 is excluded from sites of viral RNA synthesis and encapsidation, allowing for the generation of progeny virions. In terms of biological role, involved in the viral replication complex and viral polypeptide maturation. It exhibits protease activity with a specificity and catalytic efficiency that is different from protease 3C. Protein 3CD lacks polymerase activity. Protein 3CD binds to the 5'UTR of the viral genome. Major viral protease that mediates proteolytic processing of the polyprotein. Cleaves host EIF5B, contributing to host translation shutoff. Cleaves also host PABPC1, contributing to host translation shutoff. Cleaves and inhibits host RIGI, thereby inhibiting the type-I IFN production and the establishment of the antiviral state. Cleaves and inhibits host MAVS, thereby inhibiting the type-I IFN production and the establishment of the antiviral state. Cleaves and inhibits host TICAM1/TRIF, thereby inhibiting the type-I IFN production. Cleaves host NLRP1, triggers host N-glycine-mediated degradation of the autoinhibitory NLRP1 N-terminal fragment. Cleaves host transcription factor TFEB, thereby disrupting host lysosomal functions and enhancing viral infection. Functionally, replicates the viral genomic RNA on the surface of intracellular membranes. May form linear arrays of subunits that propagate along a strong head-to-tail interaction called interface-I. Covalently attaches UMP to a tyrosine of VPg, which is used to prime RNA synthesis. The positive stranded RNA genome is first replicated at virus induced membranous vesicles, creating a dsRNA genomic replication form. This dsRNA is then used as template to synthesize positive stranded RNA genomes. ss(+)RNA genomes are either translated, replicated or encapsidated. This Coxsackievirus B3 (strain Nancy) protein is Genome polyprotein.